The chain runs to 158 residues: NAD(P)H-quinone oxidoreductase subunit J, chloroplastic (158 aa).

The protein belongs to the complex I 30 kDa subunit family. NDH is composed of at least 16 different subunits, 5 of which are encoded in the nucleus.

It localises to the plastid. The protein localises to the chloroplast thylakoid membrane. It carries out the reaction a plastoquinone + NADH + (n+1) H(+)(in) = a plastoquinol + NAD(+) + n H(+)(out). It catalyses the reaction a plastoquinone + NADPH + (n+1) H(+)(in) = a plastoquinol + NADP(+) + n H(+)(out). In terms of biological role, NDH shuttles electrons from NAD(P)H:plastoquinone, via FMN and iron-sulfur (Fe-S) centers, to quinones in the photosynthetic chain and possibly in a chloroplast respiratory chain. The immediate electron acceptor for the enzyme in this species is believed to be plastoquinone. Couples the redox reaction to proton translocation, and thus conserves the redox energy in a proton gradient. The sequence is that of NAD(P)H-quinone oxidoreductase subunit J, chloroplastic from Olimarabidopsis pumila (Dwarf rocket).